The following is a 74-amino-acid chain: Antimicrobial peptide AcrAP2 (74 aa).

The first 22 residues, 1-22, serve as a signal peptide directing secretion; the sequence is MEIKYLLTVFLVLLIVSDHCQA. Residue K40 is modified to Lysine amide. Positions 46–74 are excised as a propeptide; sequence NLDGQIDRFRNFRKRDAELEELLSKLPIY.

Belongs to the non-disulfide-bridged peptide (NDBP) superfamily. Short antimicrobial peptide (group 4) family. Expressed by the venom gland.

It is found in the secreted. The protein localises to the target cell membrane. Its function is as follows. Has antimicrobial activity against the Gram-positive bacteria S.aureus (MIC=8 uM) and the yeast C.albicans (MIC=16 uM). Causes hemolysis on horse erythrocytes (64 uM for 100% hemolysis). Minimum bactericidal concentrations have also been tested against S.aureus and is four-fold higher (MBC=32 uM). This chain is Antimicrobial peptide AcrAP2, found in Androctonus crassicauda (Arabian fat-tailed scorpion).